The chain runs to 160 residues: Ubiquitin-conjugating enzyme E2 16 (160 aa).

Residues 3–153 enclose the UBC core domain; the sequence is SSIKRLHKEY…VRCTTYLYAK (151 aa). Residue Cys90 is the Glycyl thioester intermediate of the active site.

It belongs to the ubiquitin-conjugating enzyme family.

The catalysed reaction is S-ubiquitinyl-[E1 ubiquitin-activating enzyme]-L-cysteine + [E2 ubiquitin-conjugating enzyme]-L-cysteine = [E1 ubiquitin-activating enzyme]-L-cysteine + S-ubiquitinyl-[E2 ubiquitin-conjugating enzyme]-L-cysteine.. It participates in protein modification; protein ubiquitination. Its function is as follows. Catalyzes the covalent attachment of ubiquitin to other proteins. This Schizosaccharomyces pombe (strain 972 / ATCC 24843) (Fission yeast) protein is Ubiquitin-conjugating enzyme E2 16 (ubc16).